Consider the following 359-residue polypeptide: Homeotic protein knotted-1 (359 aa).

Disordered regions lie at residues 1-34 (MEEI…PWAS) and 213-232 (LSSG…TELP). Residues 16–31 (GHGHGQHHHHHHHHHP) are compositionally biased toward basic residues. The ELK domain maps to 242–262 (ELKHHLLKKYSGYLSSLKQEL). The homeobox; TALE-type DNA-binding region spans 263-326 (SKKKKKGKLP…NQRKRHWKPS (64 aa)).

This sequence belongs to the TALE/KNOX homeobox family. In terms of assembly, forms homodimers. Binds to MBP2C; this interaction reduces RNA binding capacity. Expressed in apical meristems of vegetative and floral stems as well as in the underlying ground meristem. Specifically expressed in vascular bundles developing both in the leaf and stem. Very low levels of expression in leaves.

Its subcellular location is the nucleus. It is found in the cell junction. The protein resides in the plasmodesma. It localises to the cytoplasm. Its function is as follows. Binds to RNA. Possible transcription factor that regulates genes involved in development. Mutations in KN-1 alter leaf development. Foci of cells along the lateral vein do not differentiate properly but continue to divide, forming knots. May participate in the switch from indeterminate to determinate cell fates. Probably binds to the DNA sequence 5'-TGAC-3'. The protein is Homeotic protein knotted-1 (KN-1) of Zea mays (Maize).